Reading from the N-terminus, the 267-residue chain is Membrane-spanning 4-domains subfamily A member 10 (267 aa).

The Cytoplasmic segment spans residues 1–61 (MKAEATVIPS…KKSSLLKELG (61 aa)). The helical transmembrane segment at 62-82 (AFHITIALLHLVFGGYLASIV) threads the bilayer. The Extracellular segment spans residues 83 to 91 (KNLHLVVLK). Residues 92 to 112 (SWYPFWGAASFLISGILAITM) form a helical membrane-spanning segment. The Cytoplasmic segment spans residues 113-121 (KTFSKTYLK). The chain crosses the membrane as a helical span at residues 122-142 (MLCLMTNLISLFCVLSGLFVI). Residues 143–171 (SKDLFLESPFESPIWRMYPNSTVHIQRLE) are Extracellular-facing. A helical membrane pass occupies residues 172–192 (LALLCFTVLELFLPVPTAVTA). The Cytoplasmic portion of the chain corresponds to 193–267 (WRGDCPSAKN…GAAIWTQTAN (75 aa)).

This sequence belongs to the MS4A family.

It is found in the membrane. In terms of biological role, may be involved in signal transduction as a component of a multimeric receptor complex. This chain is Membrane-spanning 4-domains subfamily A member 10 (MS4A10), found in Homo sapiens (Human).